Consider the following 303-residue polypeptide: Caspase-7 (303 aa).

At M1 the chain carries N-acetylmethionine. A propeptide spanning residues 1–23 (MTDDQDCAAELEKVDSSSEDGVD) is cleaved from the precursor. Residues 1 to 26 (MTDDQDCAAELEKVDSSSEDGVDAKP) form a disordered region. Residues 10–26 (ELEKVDSSSEDGVDAKP) are compositionally biased toward basic and acidic residues. S30 bears the Phosphoserine mark. The interval 38–41 (KKKR) is exosite. Residues 76 to 87 (KNFDKATGMDVR) are loop L1. H144 is an active-site residue. Residue T173 is modified to Phosphothreonine. C186 is an active-site residue. A loop L2 region spans residues 187–196 (RGTELDDGIQ). The propeptide occupies 199-206 (SGPINDID). The tract at residues 226–238 (VPGYYSWRNPGKG) is loop L3. S239 carries the phosphoserine modification. Residues 274-288 (ESQSDDPRFNEKKQI) are loop L4.

It belongs to the peptidase C14A family. As to quaternary structure, heterotetramer that consists of two anti-parallel arranged heterodimers, each one formed by a 20 kDa (p20) and a 11 kDa (p11) subunit. Interacts with XIAP (via its second BIR domain); inhibiting CASP7 activity. Interacts with BIRC6/bruce. Interacts with ATXN3 (short isoform 1). Interacts with HSPA5. Cleavage by different proteases, such as granzyme B (GZMB), caspase-1 (CASP1), caspase-8 (CASP8) or caspase-9 (CASP9) generate the two active subunits. Its involvement in different programmed cell death processes is probably specified by the protease that activates CASP7. Cleaved and activated by initiator caspases (CASP8 and/or CASP9), leading to execution phase of apoptosis. Cleavage and maturation by GZMB regulates granzyme-mediated programmed cell death. Cleaved and activated by CASP1 in response to bacterial infection. Propeptide domains can also be cleaved efficiently by CASP3. Active heterodimers between the small subunit of caspase-7 and the large subunit of CASP3, and vice versa, also occur. Also cleaved at the N-terminus at alternative sites by CAPN1, leading to its activation. In terms of processing, phosphorylation at Ser-30 and Ser-239 by PAK2 inhibits its activity. Phosphorylation at Ser-30 prevents cleavage and activation by initiator caspase CASP9, while phosphorylation at Ser-239 prevents thiol protease activity by preventing substrate-binding. Post-translationally, ubiquitinated by BIRC6; this activity is inhibited by DIABLO/SMAC. Highly expressed in heart, lung, liver and kidney. Low levels in spleen, skeletal muscle and testis. No expression in the brain.

The protein localises to the cytoplasm. The protein resides in the cytosol. It is found in the nucleus. It localises to the secreted. Its subcellular location is the extracellular space. The enzyme catalyses Strict requirement for an Asp residue at position P1 and has a preferred cleavage sequence of Asp-Glu-Val-Asp-|-.. During activation, the N-terminal disordered prodomain is removed by cleavage. Concomitantly, double cleavage gives rise to a large Caspase-7 subunit p20 and a small Caspase-7 subunit p11. The two large and two small subunits then assemble to form the active CASP7 complex. Can be cleaved and activated by different caspases, depending on the context. Cleaved and activated by initiator caspases (CASP8 and/or CASP9), leading to execution phase of apoptosis. Cleavage and maturation by GZMB regulates granzyme-mediated programmed cell death. Cleavage and maturation by CASP1 regulates pyroptosis. Inhibited by XIAP, which directly binds to the active site pocket and obstructs substrate entry. Phosphorylation at Ser-30 and Ser-239 by PAK2 inhibits its activity. Inhibited by BIRC6; following inhibition of BIRC6-caspase binding by DIABLO/SMAC, BIRC6 is subjected to caspase cleavage, leading to an increase in active caspases. Thiol protease involved in different programmed cell death processes, such as apoptosis, pyroptosis or granzyme-mediated programmed cell death, by proteolytically cleaving target proteins. Has a marked preference for Asp-Glu-Val-Asp (DEVD) consensus sequences, with some plasticity for alternate non-canonical sequences. Its involvement in the different programmed cell death processes is probably determined by upstream proteases that activate CASP7. Acts as an effector caspase involved in the execution phase of apoptosis: following cleavage and activation by initiator caspases (CASP8 and/or CASP9), mediates execution of apoptosis by catalyzing cleavage of proteins, such as CLSPN, PARP1, PTGES3 and YY1. Compared to CASP3, acts as a minor executioner caspase and cleaves a limited set of target proteins. Acts as a key regulator of the inflammatory response in response to bacterial infection by catalyzing cleavage and activation of the sphingomyelin phosphodiesterase SMPD1 in the extracellular milieu, thereby promoting membrane repair. Regulates pyroptosis in intestinal epithelial cells: cleaved and activated by CASP1 in response to S.typhimurium infection, promoting its secretion to the extracellular milieu, where it catalyzes activation of SMPD1, generating ceramides that repair membranes and counteract the action of gasdermin-D (GSDMD) pores. Regulates granzyme-mediated programmed cell death in hepatocytes: cleaved and activated by granzyme B (GZMB) in response to bacterial infection, promoting its secretion to the extracellular milieu, where it catalyzes activation of SMPD1, generating ceramides that repair membranes and counteract the action of perforin (PRF1) pores. Following cleavage by CASP1 in response to inflammasome activation, catalyzes processing and inactivation of PARP1, alleviating the transcription repressor activity of PARP1. Acts as an inhibitor of type I interferon production during virus-induced apoptosis by mediating cleavage of antiviral proteins CGAS, IRF3 and MAVS, thereby preventing cytokine overproduction. Cleaves and activates sterol regulatory element binding proteins (SREBPs). Cleaves phospholipid scramblase proteins XKR4, XKR8 and XKR9. Cleaves BIRC6 following inhibition of BIRC6-caspase binding by DIABLO/SMAC. The chain is Caspase-7 from Mus musculus (Mouse).